The chain runs to 301 residues: Homeobox protein Nkx-2.6 (301 aa).

Positions 22-135 (ERSCPAASPH…QPKARQRRKP (114 aa)) are disordered. The segment at residues 132-191 (RRKPRVLFSQAQVLALERRFKQQRYLSAPEREHLASALQLTSTQVKIWFQNRRYKCKRQR) is a DNA-binding region (homeobox).

Belongs to the NK-2 homeobox family.

It is found in the nucleus. In terms of biological role, acts as a transcriptional activator. In conjunction with NKX2-5, may play a role in both pharyngeal and cardiac embryonic development. This Homo sapiens (Human) protein is Homeobox protein Nkx-2.6 (NKX2-6).